The following is a 1068-amino-acid chain: Carbamoyl phosphate synthase large chain (1068 aa).

The tract at residues 1-401 (MPRNNDIKKV…ALMKAIRSLE (401 aa)) is carboxyphosphate synthetic domain. ATP-binding residues include Arg129, Arg169, Gly175, Gly176, Arg208, Ile210, Glu215, Gly241, Val242, His243, Gln284, and Glu298. The region spanning 133-327 (KDTMEKIGEP…IAKVTAKIAL (195 aa)) is the ATP-grasp 1 domain. Positions 284, 298, and 300 each coordinate Mg(2+). Mn(2+)-binding residues include Gln284, Glu298, and Asn300. The segment at 402-546 (QHVDSLMSYD…YSVFGSENEA (145 aa)) is oligomerization domain. A carbamoyl phosphate synthetic domain region spans residues 547–930 (AETNPQKKVL…ALYKAFEGAG (384 aa)). One can recognise an ATP-grasp 2 domain in the interval 672–862 (DEILQKTGIP…IVDLAARIIM (191 aa)). Residues Arg708, Lys747, Leu749, Glu753, Gly778, Val779, His780, Ser781, Gln821, and Glu833 each coordinate ATP. Residues Gln821, Glu833, and Asn835 each contribute to the Mg(2+) site. Gln821, Glu833, and Asn835 together coordinate Mn(2+). Residues 931 to 1068 (VELPKYKQMI…PVDIATVKNL (138 aa)) enclose the MGS-like domain. The interval 931 to 1068 (VELPKYKQMI…PVDIATVKNL (138 aa)) is allosteric domain.

The protein belongs to the CarB family. In terms of assembly, composed of two chains; the small (or glutamine) chain promotes the hydrolysis of glutamine to ammonia, which is used by the large (or ammonia) chain to synthesize carbamoyl phosphate. Tetramer of heterodimers (alpha,beta)4. Mg(2+) serves as cofactor. It depends on Mn(2+) as a cofactor.

The enzyme catalyses hydrogencarbonate + L-glutamine + 2 ATP + H2O = carbamoyl phosphate + L-glutamate + 2 ADP + phosphate + 2 H(+). The catalysed reaction is hydrogencarbonate + NH4(+) + 2 ATP = carbamoyl phosphate + 2 ADP + phosphate + 2 H(+). It participates in amino-acid biosynthesis; L-arginine biosynthesis; carbamoyl phosphate from bicarbonate: step 1/1. The protein operates within pyrimidine metabolism; UMP biosynthesis via de novo pathway; (S)-dihydroorotate from bicarbonate: step 1/3. In terms of biological role, large subunit of the glutamine-dependent carbamoyl phosphate synthetase (CPSase). CPSase catalyzes the formation of carbamoyl phosphate from the ammonia moiety of glutamine, carbonate, and phosphate donated by ATP, constituting the first step of 2 biosynthetic pathways, one leading to arginine and/or urea and the other to pyrimidine nucleotides. The large subunit (synthetase) binds the substrates ammonia (free or transferred from glutamine from the small subunit), hydrogencarbonate and ATP and carries out an ATP-coupled ligase reaction, activating hydrogencarbonate by forming carboxy phosphate which reacts with ammonia to form carbamoyl phosphate. This Agathobacter rectalis (strain ATCC 33656 / DSM 3377 / JCM 17463 / KCTC 5835 / VPI 0990) (Eubacterium rectale) protein is Carbamoyl phosphate synthase large chain.